We begin with the raw amino-acid sequence, 239 residues long: tRNA1(Val) (adenine(37)-N6)-methyltransferase (239 aa).

This sequence belongs to the methyltransferase superfamily. tRNA (adenine-N(6)-)-methyltransferase family.

It is found in the cytoplasm. It carries out the reaction adenosine(37) in tRNA1(Val) + S-adenosyl-L-methionine = N(6)-methyladenosine(37) in tRNA1(Val) + S-adenosyl-L-homocysteine + H(+). Its function is as follows. Specifically methylates the adenine in position 37 of tRNA(1)(Val) (anticodon cmo5UAC). This is tRNA1(Val) (adenine(37)-N6)-methyltransferase from Vibrio vulnificus (strain YJ016).